The following is a 257-amino-acid chain: Gamma-secretase subunit APH-1B (257 aa).

The next 7 membrane-spanning stretches (helical) occupy residues 5–25 (VFFG…VFTI), 32–52 (IIFL…SSLV), 70–90 (YLLI…RFAY), 115–135 (LLAY…SFVN), 158–178 (YSAF…IVFF), 186–206 (WGIL…TFIS), and 213–233 (LASA…AAGG).

It belongs to the APH-1 family. Probable component of the gamma-secretase complex, a complex composed of a presenilin homodimer (PSEN1 or PSEN2), nicastrin (NCSTN), APH1 (APH1A or APH1B) and PEN2. Such minimal complex is sufficient for secretase activity, although other components may exist. Interacts with PSEN1 and PSEN2.

The protein localises to the membrane. Probable subunit of the gamma-secretase complex, an endoprotease complex that catalyzes the intramembrane cleavage of integral proteins such as Notch receptors and APP (amyloid-beta precursor protein). It probably represents a stabilizing cofactor for the presenilin homodimer that promotes the formation of a stable complex. Probably present in a minority of gamma-secretase complexes compared to APH1A. The sequence is that of Gamma-secretase subunit APH-1B (APH1B) from Pongo abelii (Sumatran orangutan).